A 498-amino-acid chain; its full sequence is Thiamine transporter 1 (498 aa).

Position 1 is an N-acetylmethionine (Met1). Topologically, residues 1–28 are cytoplasmic; sequence MDVPARVSRRAAAAAARMLLRTARVPRE. A helical membrane pass occupies residues 29–46; sequence CWFLPTALLCAYGFFANL. Residues 47 to 71 are Extracellular-facing; sequence RPSEPFLTPYLLGPDKNLTERQVYN. N-linked (GlcNAc...) asparagine glycosylation occurs at Asn63. The helical transmembrane segment at 72–92 threads the bilayer; it reads EIYPVWTYSYLLLLFPVFLAT. The Cytoplasmic portion of the chain corresponds to 93–105; the sequence is DYLRYKPVILLQG. Residues 106–126 traverse the membrane as a helical segment; sequence LSLIVTWFMLLYAQGLLAIQF. At 127-128 the chain is on the extracellular side; it reads LE. Residues 129-149 traverse the membrane as a helical segment; sequence FFYGIATATEIAYYSYIYTVV. The Cytoplasmic segment spans residues 150–164; it reads DLGMYQKVTSYCRSA. Residues 165 to 185 form a helical membrane-spanning segment; it reads TLVGFTVGSVLGQILVSVVGW. Residue Ser186 is a topological domain, extracellular. A helical membrane pass occupies residues 187–207; that stretch reads LFSLNVISLTCVSVAFAVAWF. Residues 208–295 lie on the Cytoplasmic side of the membrane; sequence LPMPQKSLFF…DFLMCYSSRP (88 aa). The residue at position 222 (Ser222) is a Phosphoserine. The helical transmembrane segment at 296–316 threads the bilayer; sequence LLCWSVWWALSTCGYFQVVNY. At 317-334 the chain is on the extracellular side; sequence AQGLWEKVMPSQNADIYN. A helical transmembrane segment spans residues 335–355; the sequence is GGVEAVSTLLGASAVFAVGYI. Over 356-360 the chain is Cytoplasmic; sequence KLSWS. Residues 361-381 traverse the membrane as a helical segment; it reads TWGEMTLFLCSLLIAAAVYVM. Topologically, residues 382–386 are extracellular; the sequence is DTVQS. Residues 387–407 form a helical membrane-spanning segment; it reads IWVCYASYVVFRIIYMVLITI. The Cytoplasmic portion of the chain corresponds to 408 to 423; sequence ATFQIAANLSMERYAL. The helical transmembrane segment at 424–444 threads the bilayer; that stretch reads VFGVNTFIALALQTLLTLIVV. Over 445 to 456 the chain is Extracellular; it reads DARGLGLCITTQ. A helical membrane pass occupies residues 457–477; sequence FLIYASYFAAISVVFLANGIV. Topologically, residues 478-498 are cytoplasmic; sequence SIIKKCRKQEDPSSSPQASTS.

Belongs to the reduced folate carrier (RFC) transporter (TC 2.A.48) family. In terms of assembly, interacts with TSPAN1; this interaction increases the stability of SLC19A2. Interacts with TMEM63B. As to expression, expressed in liver. Expressed in cochlear hair cells and duodenum (at protein level). Detected in pancreatic acinar cells (at protein level). Also expressed strongly in pancreatic islet cells. Expressed in the testis. In terms of tissue distribution, very highly expressed in liver, and also detected at lower levels in heart, testis, kidney, brain and spleen. Expressed at low levels in liver and spleen.

The protein resides in the cell membrane. It carries out the reaction thiamine(out) + H(+)(in) = thiamine(in) + H(+)(out). The catalysed reaction is pyridoxine(out) + n H(+)(out) = pyridoxine(in) + n H(+)(in). Its function is as follows. High-affinity transporter for the intake of thiamine. Essential for spermatogenesis. Mediates H(+)-dependent pyridoxine transport. This is Thiamine transporter 1 from Mus musculus (Mouse).